We begin with the raw amino-acid sequence, 452 residues long: Probable ECA polymerase (452 aa).

11 helical membrane-spanning segments follow: residues phenylalanine 6 to phenylalanine 26, valine 37 to leucine 57, valine 63 to glycine 83, valine 118 to leucine 138, glycine 155 to leucine 175, alanine 181 to glycine 201, isoleucine 207 to tryptophan 227, methionine 228 to tyrosine 248, leucine 341 to isoleucine 361, tyrosine 378 to valine 398, and valine 410 to phenylalanine 430.

Belongs to the WzyE family. As to quaternary structure, probably part of a complex composed of WzxE, WzyE and WzzE.

It localises to the cell inner membrane. The protein operates within bacterial outer membrane biogenesis; enterobacterial common antigen biosynthesis. Its function is as follows. Probably involved in the polymerization of enterobacterial common antigen (ECA) trisaccharide repeat units. The chain is Probable ECA polymerase from Salmonella gallinarum (strain 287/91 / NCTC 13346).